The following is a 377-amino-acid chain: Protein RecA (377 aa).

65–72 (GPESSGKT) serves as a coordination point for ATP. The interval 329-377 (GDEEAAATKATETKTDAPKDKDKGKTKAKDKPADVTPGQIELAPDKSAK) is disordered. Positions 339–361 (TETKTDAPKDKDKGKTKAKDKPA) are enriched in basic and acidic residues.

The protein belongs to the RecA family.

The protein localises to the cytoplasm. In terms of biological role, can catalyze the hydrolysis of ATP in the presence of single-stranded DNA, the ATP-dependent uptake of single-stranded DNA by duplex DNA, and the ATP-dependent hybridization of homologous single-stranded DNAs. It interacts with LexA causing its activation and leading to its autocatalytic cleavage. This is Protein RecA from Levilactobacillus brevis (strain ATCC 367 / BCRC 12310 / CIP 105137 / JCM 1170 / LMG 11437 / NCIMB 947 / NCTC 947) (Lactobacillus brevis).